The chain runs to 403 residues: Zinc finger HIT domain-containing protein 2 (403 aa).

Residue M1 is modified to N-acetylmethionine. Positions 7, 10, 22, 25, 30, 34, 38, and 41 each coordinate Zn(2+). An HIT-type zinc finger spans residues 7–41 (CGFCPAGEVQPARYTCPRCNAPYCSLRCYRTHGTC). A disordered region spans residues 72-98 (RQQRETEDEPGEAGLSSGPAPGGLSGL). T161 is subject to Phosphothreonine.

As to quaternary structure, interacts (via HIT-type zinc finger) with RUVBL2 in the presence of ATP or ADP; shows a stronger interaction in the presence of ADP. Low expression in most tissues; highly expressed in testis.

May act as a bridging factor mediating the interaction between the R2TP/Prefoldin-like (R2TP/PFDL) complex and U5 small nuclear ribonucleoprotein (U5 snRNP). Required for the interaction of R2TP complex subunit RPAP3 and prefoldin-like subunit URI1 with U5 snRNP proteins EFTUD2 and PRPF8. May play a role in regulating the composition of the U5 snRNP complex. The polypeptide is Zinc finger HIT domain-containing protein 2 (ZNHIT2) (Homo sapiens (Human)).